We begin with the raw amino-acid sequence, 945 residues long: Microtubule cross-linking factor 3 (945 aa).

Composition is skewed to low complexity over residues 1-23, 72-93, and 110-126; these read MSQP…AAAT, QQQL…TSGT, and PKGA…GAEG. The first 25 residues, 1–25, serve as a signal peptide directing secretion; that stretch reads MSQPPSGGAAPAATSASAAAAATEA. Disordered stretches follow at residues 1 to 250, 265 to 293, 307 to 366, and 494 to 522; these read MSQP…SYWK, KERA…PVAG, SPMA…TLKN, and LSLK…DNED. Positions 141–151 are enriched in basic and acidic residues; it reads GQPEEAPREIE. Over residues 164–179 the composition is skewed to gly residues; it reads GGVGGGGEGGGAGGGP. Over residues 219-235 the composition is skewed to low complexity; that stretch reads TAATSKTPGPGSRNSGS. Over residues 236–247 the composition is skewed to gly residues; that stretch reads GSTGSGSGGGGS. A compositionally biased stretch (low complexity) spans 328–345; it reads AMQAAAPPSSQPHSQQLQ. Residues 340 to 724 are a coiled coil; that stretch reads HSQQLQEQED…GKVMQLQYEN (385 aa). Composition is skewed to basic and acidic residues over residues 353-366 and 494-511; these read EMEK…TLKN and LSLK…EKKA. Serine 567 carries the post-translational modification Phosphoserine. The interval 741–811 is disordered; the sequence is GIRGSPRDSD…PWPKSFSDRQ (71 aa). The segment covering 745 to 766 has biased composition (basic and acidic residues); that stretch reads SPRDSDAESDAGKKESDDDSRP. Serine 779 carries the post-translational modification Phosphoserine. Residues 809 to 833 are a coiled coil; the sequence is DRQQMKDIRSEAERLGKTIDRLIAD. A helical membrane pass occupies residues 913 to 933; that stretch reads PIILLILILVLFSSLSYTTIF.

This sequence belongs to the MTCL family.

The protein localises to the membrane. This is Microtubule cross-linking factor 3 (Mtcl3) from Mus musculus (Mouse).